The primary structure comprises 207 residues: Cytochrome c oxidase subunit 3 (207 aa).

5 helical membrane-spanning segments follow: residues 30 to 50 (FWLF…TFLA), 67 to 87 (VTLV…SVYA), 101 to 121 (LWLG…IYEF), 144 to 164 (LVGT…TLMI), and 186 to 206 (WHFI…MGMV).

The protein belongs to the cytochrome c oxidase subunit 3 family.

It is found in the cell membrane. The enzyme catalyses 4 Fe(II)-[cytochrome c] + O2 + 8 H(+)(in) = 4 Fe(III)-[cytochrome c] + 2 H2O + 4 H(+)(out). The protein is Cytochrome c oxidase subunit 3 (ctaE) of Bacillus subtilis (strain 168).